Here is a 445-residue protein sequence, read N- to C-terminus: NADH-quinone oxidoreductase subunit F (445 aa).

61-70 provides a ligand contact to NAD(+); sequence GRGGAGFSTG. 174–221 is an FMN binding site; the sequence is GAGRYICGEETALINSLEGRRANPRSKPPFPATSGVWGKPTCVNNVET. [4Fe-4S] cluster-binding residues include cysteine 351, cysteine 354, cysteine 357, and cysteine 398.

The protein belongs to the complex I 51 kDa subunit family. In terms of assembly, composed of 13 different subunits. Subunits NuoCD, E, F, and G constitute the peripheral sector of the complex. The cofactor is FMN. It depends on [4Fe-4S] cluster as a cofactor.

It carries out the reaction a quinone + NADH + 5 H(+)(in) = a quinol + NAD(+) + 4 H(+)(out). Its function is as follows. NDH-1 shuttles electrons from NADH, via FMN and iron-sulfur (Fe-S) centers, to quinones in the respiratory chain. The immediate electron acceptor for the enzyme in this species is believed to be ubiquinone. Couples the redox reaction to proton translocation (for every two electrons transferred, four hydrogen ions are translocated across the cytoplasmic membrane), and thus conserves the redox energy in a proton gradient. In Salmonella typhimurium (strain LT2 / SGSC1412 / ATCC 700720), this protein is NADH-quinone oxidoreductase subunit F (nuoF).